The following is a 108-amino-acid chain: Insulin (108 aa).

A signal peptide spans 1–21 (MAVWLQAGALLVLLVVSSVST). Cystine bridges form between C30–C94, C42–C107, and C93–C98. A propeptide spans 54 to 84 (DVEPLLGFLPPKSAQETEVADFAFKDHAELI) (c peptide).

It belongs to the insulin family. Heterodimer of a B chain and an A chain linked by two disulfide bonds.

The protein localises to the secreted. Insulin decreases blood glucose concentration. It increases cell permeability to monosaccharides, amino acids and fatty acids. It accelerates glycolysis, the pentose phosphate cycle, and glycogen synthesis in liver. The protein is Insulin (ins) of Danio rerio (Zebrafish).